Reading from the N-terminus, the 1685-residue chain is Phosphatidylinositol 4-phosphate 3-kinase C2 domain-containing subunit alpha (1685 aa).

Disordered stretches follow at residues 1-33 (MAQI…EALQ) and 41-60 (KLQK…LSSS). Ala2 is subject to N-acetylalanine. The segment at 2–142 (AQISSNSGFK…FRPTIQRGQW (141 aa)) is interaction with clathrin; sufficient to induce clathrin assembly. Basic and acidic residues predominate over residues 19-31 (EPTRAKDVDKEEA). The segment covering 49 to 60 (TDNQRGFELSSS) has biased composition (polar residues). Ser60, Ser108, Ser259, Ser327, and Ser338 each carry phosphoserine. The region spanning 419–507 (NASVKVSIDI…DTEIRLQLLT (89 aa)) is the PI3K-RBD domain. Ser628 bears the Phosphoserine mark. Residues 680–839 (TTEQLQFTIF…ERIVLQVDFP (160 aa)) enclose the C2 PI3K-type domain. The PIK helical domain maps to 859–1035 (QHNLETLEND…EHVLGALLSV (177 aa)). Residues 1103 to 1381 (SIKSCSFFSS…LIESSLGSIA (279 aa)) enclose the PI3K/PI4K catalytic domain. The interval 1109–1115 (FFSSNAV) is G-loop. The tract at residues 1245 to 1253 (GICDRHNDN) is catalytic loop. The interval 1264–1290 (HIDFGKFLGHAQMFGTFKRDRAPFVLT) is activation loop. The PX domain occupies 1420 to 1536 (GRIKEVSVFT…TFFHPLLRDE (117 aa)). The interval 1486–1491 (RMVLGR) is interaction with PtdIns(4,5)P2-containing membranes. A Phosphoserine modification is found at Ser1551. The region spanning 1554–1677 (TPGQIGGAVK…NLSKETVKWY (124 aa)) is the C2 domain. Residues 1607-1618 (SKRKTKISRKTR) carry the Nuclear localization signal motif.

This sequence belongs to the PI3/PI4-kinase family. In terms of assembly, part of a complex with ERBB2 and EGFR. Interacts with clathrin trimers. Interacts with SBF2/MTMR13. Ca(2+) serves as cofactor. Mg(2+) is required as a cofactor. Phosphorylated on Ser-259 during mitosis and upon UV irradiation; which does not change enzymatic activity but leads to proteasomal degradation. Phosphorylated upon insulin stimulation; which may lead to enzyme activation.

Its subcellular location is the cell membrane. It is found in the cytoplasmic vesicle. It localises to the clathrin-coated vesicle. The protein localises to the nucleus. The protein resides in the cytoplasm. Its subcellular location is the golgi apparatus. It is found in the trans-Golgi network. The catalysed reaction is a 1,2-diacyl-sn-glycero-3-phospho-(1D-myo-inositol 4-phosphate) + ATP = a 1,2-diacyl-sn-glycero-3-phospho-(1D-myo-inositol-3,4-bisphosphate) + ADP + H(+). The enzyme catalyses a 1,2-diacyl-sn-glycero-3-phospho-(1D-myo-inositol) + ATP = a 1,2-diacyl-sn-glycero-3-phospho-(1D-myo-inositol-3-phosphate) + ADP + H(+). It catalyses the reaction a 1,2-diacyl-sn-glycero-3-phospho-(1D-myo-inositol-4,5-bisphosphate) + ATP = a 1,2-diacyl-sn-glycero-3-phospho-(1D-myo-inositol-3,4,5-trisphosphate) + ADP + H(+). Its activity is regulated as follows. Only slightly inhibited by wortmannin and LY294002. Activated by clathrin and insulin. In terms of biological role, generates phosphatidylinositol 3-phosphate (PtdIns3P) and phosphatidylinositol 3,4-bisphosphate (PtdIns(3,4)P2) that act as second messengers. Has a role in several intracellular trafficking events. Functions in insulin signaling and secretion. Required for translocation of the glucose transporter SLC2A4/GLUT4 to the plasma membrane and glucose uptake in response to insulin-mediated RHOQ activation. Regulates insulin secretion through two different mechanisms: involved in glucose-induced insulin secretion downstream of insulin receptor in a pathway that involves AKT1 activation and TBC1D4/AS160 phosphorylation, and participates in the late step of insulin granule exocytosis probably in insulin granule fusion. Synthesizes PtdIns3P in response to insulin signaling. Functions in clathrin-coated endocytic vesicle formation and distribution. Regulates dynamin-independent endocytosis, probably by recruiting EEA1 to internalizing vesicles. In neurosecretory cells synthesizes PtdIns3P on large dense core vesicles. Participates in calcium induced contraction of vascular smooth muscle by regulating myosin light chain (MLC) phosphorylation through a mechanism involving Rho kinase-dependent phosphorylation of the MLCP-regulatory subunit MYPT1. May play a role in the EGF signaling cascade. May be involved in mitosis and UV-induced damage response. Required for maintenance of normal renal structure and function by supporting normal podocyte function. Involved in the regulation of ciliogenesis and trafficking of ciliary components. In Pongo abelii (Sumatran orangutan), this protein is Phosphatidylinositol 4-phosphate 3-kinase C2 domain-containing subunit alpha (PIK3C2A).